The following is a 409-amino-acid chain: Glycosaminoglycan xylosylkinase (409 aa).

Topologically, residues 1–6 (MKLKQR) are cytoplasmic. A helical; Signal-anchor for type II membrane protein transmembrane segment spans residues 7 to 25 (VVLLAILLVIFIFTKVFLI). Residues 26 to 409 (DNLDTSAANR…VEDRMPLSHL (384 aa)) lie on the Lumenal side of the membrane. Residues Gln107 and Lys123 each coordinate ATP. Asp142 provides a ligand contact to Mn(2+). Asn193 is a glycosylation site (N-linked (GlcNAc...) asparagine). Intrachain disulfides connect Cys196-Cys211 and Cys201-Cys204. 222 to 225 (TLWL) is an ATP binding site. 2 disulfide bridges follow: Cys257/Cys331 and Cys332/Cys389. The active site involves Asp289. ATP-binding residues include Glu294 and Asp309. Asp309 provides a ligand contact to Mn(2+).

The protein belongs to the FAM20 family. Requires Mn(2+) as cofactor. In terms of tissue distribution, widely expressed. Strongly expressed in pancreas, spleen and fetal liver.

Its subcellular location is the golgi apparatus membrane. The enzyme catalyses 3-O-(beta-D-galactosyl-(1-&gt;3)-beta-D-galactosyl-(1-&gt;4)-beta-D-xylosyl)-L-seryl-[protein] + ATP = 3-O-(beta-D-galactosyl-(1-&gt;3)-beta-D-galactosyl-(1-&gt;4)-beta-D-2-O-phosphoxylosyl)-L-seryl-[protein] + ADP + H(+). Its function is as follows. Responsible for the 2-O-phosphorylation of xylose in the glycosaminoglycan-protein linkage region of proteoglycans thereby regulating the amount of mature GAG chains. Sulfated glycosaminoglycans (GAGs), including heparan sulfate and chondroitin sulfate, are synthesized on the so-called common GAG-protein linkage region (GlcUAbeta1-3Galbeta1-3Galbeta1-4Xylbeta1-O-Ser) of core proteins, which is formed by the stepwise addition of monosaccharide residues by the respective specific glycosyltransferases. Xylose 2-O-phosphorylation may influence the catalytic activity of B3GAT3 (GlcAT-I) which completes the precursor tetrasaccharide of GAG-protein linkage regions on which the repeating disaccharide region is synthesized. The protein is Glycosaminoglycan xylosylkinase of Homo sapiens (Human).